The primary structure comprises 307 residues: Protein EI24 homolog (307 aa).

2 helical membrane-spanning segments follow: residues 53–73 (FIHC…IYLY) and 92–112 (MFTI…SIIA). An N-linked (GlcNAc...) asparagine glycan is attached at Asn-135. 4 helical membrane passes run 153–173 (LFGV…TNFI), 175–195 (FVII…ILRG), 225–245 (FFFP…LFII), and 260–280 (GILP…NVIL).

The protein belongs to the EI24 family.

The protein localises to the membrane. The polypeptide is Protein EI24 homolog (Dictyostelium discoideum (Social amoeba)).